We begin with the raw amino-acid sequence, 822 residues long: MGGRVFLAFCVWLTLLGAETQDSRDCARWCPENSSCVNATACRCNPGFSSSSEIFTSPTEICDDINECVPPSKVSCGKSSDCRNTEGSYDCVCNPGYELVSGAKTFKNESENTCQDVDECQQNPRLCKSYGTCVNTLGSFTCQCLPGFKFKPEDPKLCTDVNECTSGQNPCHSSTHCLNNVGSYQCRCRPGWQPIPGSPNGPNNTICEDVDECSSGLHQCDNSTVCFNTVGSYTCRCRPGWEPKHGIPNNQKDTVCKDMNFPTWTLPPGVHSQTLSQFFNKVQDLDRDFKTSSAKVTIQSILKELDELLEAPGDLETLPRFQQHCVATHLLDGLEDVLRGLSKNPSIGLLNFSYPAGTEFSLEVQKQVDRNVTLRQNQATMQLHWNLAQKSGDPGPSVVGLVSVPGMGKLLAEAPLVSEPENQVVRNETHQGLLPILLSDVISAFLSNNDTQNLSSPVTFIFSHRSVIPRRKVLCVFWEHGQNGCGHWATTGCSTMDTRDTSTICRCTHLSSFAVLMAPYDVQEEDPVLTVITYMGLSLSLLCLLLAALTFLLCKAIQNISTSLHLQLSLCLLLAHLLFLVAIDRTEHEVLCAIIASALHYLYLAAFTWMLLEALYLFLTARNLMVVNYSSINRFTKKLMFPVAYGVPAVTVAISAASRPHLYGTPSRCWLQPEKGFIWGFLGPVCAIFSVNLALLLVTLWILKNRLSSLNNEVSTLQNTRMLAFKATAQLFILGCTWCLGILQVGPAARVMAYLFTIINSLQGVFIFLVYCLLSQQVREQYRKWSKGFRKLRTESEMHTLSSSAKRDTPKPSTPGLLGLQS.

The first 18 residues, 1 to 18 (MGGRVFLAFCVWLTLLGA), serve as a signal peptide directing secretion. Over 19-530 (ETQDSRDCAR…DVQEEDPVLT (512 aa)) the chain is Extracellular. Positions 22–63 (DSRDCARWCPENSSCVNATACRCNPGFSSSSEIFTSPTEICD) constitute an EGF-like 1 domain. 5 disulfides stabilise this stretch: cysteine 26–cysteine 36, cysteine 30–cysteine 42, cysteine 44–cysteine 62, cysteine 68–cysteine 82, and cysteine 76–cysteine 91. 2 N-linked (GlcNAc...) asparagine glycosylation sites follow: asparagine 33 and asparagine 38. The EGF-like 1; calcium-binding domain maps to 64 to 103 (DINECVPPSKVSCGKSSDCRNTEGSYDCVCNPGYELVSGA). A glycan (N-linked (GlcNAc...) asparagine) is linked at asparagine 108. Residues 116–159 (DVDECQQNPRLCKSYGTCVNTLGSFTCQCLPGFKFKPEDPKLCT) enclose the EGF-like 2; calcium-binding domain. 5 disulfides stabilise this stretch: cysteine 120–cysteine 133, cysteine 127–cysteine 142, cysteine 144–cysteine 158, cysteine 164–cysteine 177, and cysteine 171–cysteine 186. In terms of domain architecture, EGF-like 3; calcium-binding spans 160-198 (DVNECTSGQNPCHSSTHCLNNVGSYQCRCRPGWQPIPGS). 7 N-linked (GlcNAc...) asparagine glycosylation sites follow: asparagine 203, asparagine 222, asparagine 351, asparagine 371, asparagine 427, asparagine 449, and asparagine 453. The EGF-like 4; calcium-binding domain maps to 209–247 (DVDECSSGLHQCDNSTVCFNTVGSYTCRCRPGWEPKHGI). 2 disulfide bridges follow: cysteine 213-cysteine 226 and cysteine 220-cysteine 235. One can recognise a GAIN-B domain in the interval 351 to 523 (NFSYPAGTEF…AVLMAPYDVQ (173 aa)). Cystine bridges form between cysteine 475-cysteine 505 and cysteine 493-cysteine 507. The interval 475-523 (CVFWEHGQNGCGHWATTGCSTMDTRDTSTICRCTHLSSFAVLMAPYDVQ) is GPS. A helical membrane pass occupies residues 531 to 551 (VITYMGLSLSLLCLLLAALTF). Over 552–562 (LLCKAIQNIST) the chain is Cytoplasmic. The chain crosses the membrane as a helical span at residues 563–583 (SLHLQLSLCLLLAHLLFLVAI). The Extracellular portion of the chain corresponds to 584 to 589 (DRTEHE). A helical transmembrane segment spans residues 590 to 610 (VLCAIIASALHYLYLAAFTWM). The Cytoplasmic segment spans residues 611 to 637 (LLEALYLFLTARNLMVVNYSSINRFTK). Residues 638–658 (KLMFPVAYGVPAVTVAISAAS) traverse the membrane as a helical segment. Residues 659 to 676 (RPHLYGTPSRCWLQPEKG) lie on the Extracellular side of the membrane. The chain crosses the membrane as a helical span at residues 677 to 697 (FIWGFLGPVCAIFSVNLALLL). Topologically, residues 698-728 (VTLWILKNRLSSLNNEVSTLQNTRMLAFKAT) are cytoplasmic. A helical transmembrane segment spans residues 729–749 (AQLFILGCTWCLGILQVGPAA). Topologically, residues 750 to 753 (RVMA) are extracellular. Residues 754–774 (YLFTIINSLQGVFIFLVYCLL) form a helical membrane-spanning segment. Topologically, residues 775-822 (SQQVREQYRKWSKGFRKLRTESEMHTLSSSAKRDTPKPSTPGLLGLQS) are cytoplasmic. Positions 797–822 (EMHTLSSSAKRDTPKPSTPGLLGLQS) are disordered.

It belongs to the G-protein coupled receptor 2 family. Adhesion G-protein coupled receptor (ADGR) subfamily. Forms a heterodimer, consisting of a large extracellular region non-covalently linked to a seven-transmembrane moiety. Interacts with chondroitin sulfate; the interaction with chondroitin sulfate is calcium-dependent. Interacts with CD55. In terms of processing, autoproteolytically cleaved into 2 subunits, an extracellular alpha subunit and a seven-transmembrane beta subunit.

The protein resides in the cell membrane. Its subcellular location is the cell projection. The protein localises to the ruffle membrane. In terms of biological role, cell surface receptor that binds to the chondroitin sulfate moiety of glycosaminoglycan chains and promotes cell attachment. Promotes granulocyte chemotaxis, degranulation and adhesion. In macrophages, promotes the release of inflammatory cytokines, including IL8 and TNF. Signals probably through G-proteins. The chain is Adhesion G protein-coupled receptor E2 (ADGRE2) from Macaca mulatta (Rhesus macaque).